The primary structure comprises 571 residues: Proline--tRNA ligase (571 aa).

This sequence belongs to the class-II aminoacyl-tRNA synthetase family. ProS type 1 subfamily. As to quaternary structure, homodimer.

It is found in the cytoplasm. The enzyme catalyses tRNA(Pro) + L-proline + ATP = L-prolyl-tRNA(Pro) + AMP + diphosphate. Its function is as follows. Catalyzes the attachment of proline to tRNA(Pro) in a two-step reaction: proline is first activated by ATP to form Pro-AMP and then transferred to the acceptor end of tRNA(Pro). As ProRS can inadvertently accommodate and process non-cognate amino acids such as alanine and cysteine, to avoid such errors it has two additional distinct editing activities against alanine. One activity is designated as 'pretransfer' editing and involves the tRNA(Pro)-independent hydrolysis of activated Ala-AMP. The other activity is designated 'posttransfer' editing and involves deacylation of mischarged Ala-tRNA(Pro). The misacylated Cys-tRNA(Pro) is not edited by ProRS. This chain is Proline--tRNA ligase, found in Photobacterium profundum (strain SS9).